The following is a 346-amino-acid chain: Holliday junction branch migration complex subunit RuvB (346 aa).

Positions 1–188 (MSDEYGPPER…FGIVQRLAYY (188 aa)) are large ATPase domain (RuvB-L). ATP contacts are provided by residues Leu27, Arg28, Gly69, Lys72, Thr73, Thr74, 135–137 (EDF), Arg178, Tyr188, and Arg225. Residue Thr73 participates in Mg(2+) binding. The segment at 189 to 259 (PVDELTRIVQ…VAADAMELLD (71 aa)) is small ATPAse domain (RuvB-S). Residues 262–346 (RNGLDEQDRR…QAAGSGDLFG (85 aa)) form a head domain (RuvB-H) region. Residues Arg298, Arg317, and Arg322 each coordinate DNA.

The protein belongs to the RuvB family. As to quaternary structure, homohexamer. Forms an RuvA(8)-RuvB(12)-Holliday junction (HJ) complex. HJ DNA is sandwiched between 2 RuvA tetramers; dsDNA enters through RuvA and exits via RuvB. An RuvB hexamer assembles on each DNA strand where it exits the tetramer. Each RuvB hexamer is contacted by two RuvA subunits (via domain III) on 2 adjacent RuvB subunits; this complex drives branch migration. In the full resolvosome a probable DNA-RuvA(4)-RuvB(12)-RuvC(2) complex forms which resolves the HJ.

The protein resides in the cytoplasm. The catalysed reaction is ATP + H2O = ADP + phosphate + H(+). The RuvA-RuvB-RuvC complex processes Holliday junction (HJ) DNA during genetic recombination and DNA repair, while the RuvA-RuvB complex plays an important role in the rescue of blocked DNA replication forks via replication fork reversal (RFR). RuvA specifically binds to HJ cruciform DNA, conferring on it an open structure. The RuvB hexamer acts as an ATP-dependent pump, pulling dsDNA into and through the RuvAB complex. RuvB forms 2 homohexamers on either side of HJ DNA bound by 1 or 2 RuvA tetramers; 4 subunits per hexamer contact DNA at a time. Coordinated motions by a converter formed by DNA-disengaged RuvB subunits stimulates ATP hydrolysis and nucleotide exchange. Immobilization of the converter enables RuvB to convert the ATP-contained energy into a lever motion, pulling 2 nucleotides of DNA out of the RuvA tetramer per ATP hydrolyzed, thus driving DNA branch migration. The RuvB motors rotate together with the DNA substrate, which together with the progressing nucleotide cycle form the mechanistic basis for DNA recombination by continuous HJ branch migration. Branch migration allows RuvC to scan DNA until it finds its consensus sequence, where it cleaves and resolves cruciform DNA. The polypeptide is Holliday junction branch migration complex subunit RuvB (Halorhodospira halophila (strain DSM 244 / SL1) (Ectothiorhodospira halophila (strain DSM 244 / SL1))).